Here is a 344-residue protein sequence, read N- to C-terminus: MRIELLNTPPDASETRIEEQIRPLRMDAFAGQQRLTDNLRVFISAAKMRGEALDHVLLSGPPGLGKTTLAYIIASEMGSSIKSTSGPLLDKAGNLAGLLTGLQKGDVLFIDEIHRMPPTVEEYLYSAMEDFRIDIMLDSGPSARAVQLRIEPFTLVGATTRSGLLTSPLRARFGINSRFDYYAPELLEGIIRRASTILGIGIDAEAASEIAGRSRGTPRIANRLLRRARDFAQVDGESFISRSIAMKTLDCLEIDEEGLDDMDKKIMETIVNKFNGGPVGIASLAVSVGEEQDTIEEVYEPYLIQAGYLTRTTRGRVATRQALIRFSTASERDEISLFDAQPTS.

The segment at 1–182 (MRIELLNTPP…FGINSRFDYY (182 aa)) is large ATPase domain (RuvB-L). ATP-binding positions include I21, R22, G63, K66, T67, T68, 129 to 131 (EDF), R172, Y182, and R219. T67 is a Mg(2+) binding site. The interval 183–253 (APELLEGIIR…IAMKTLDCLE (71 aa)) is small ATPAse domain (RuvB-S). A head domain (RuvB-H) region spans residues 256-344 (EEGLDDMDKK…ISLFDAQPTS (89 aa)). The DNA site is built by R311 and R316.

Belongs to the RuvB family. As to quaternary structure, homohexamer. Forms an RuvA(8)-RuvB(12)-Holliday junction (HJ) complex. HJ DNA is sandwiched between 2 RuvA tetramers; dsDNA enters through RuvA and exits via RuvB. An RuvB hexamer assembles on each DNA strand where it exits the tetramer. Each RuvB hexamer is contacted by two RuvA subunits (via domain III) on 2 adjacent RuvB subunits; this complex drives branch migration. In the full resolvosome a probable DNA-RuvA(4)-RuvB(12)-RuvC(2) complex forms which resolves the HJ.

Its subcellular location is the cytoplasm. The catalysed reaction is ATP + H2O = ADP + phosphate + H(+). In terms of biological role, the RuvA-RuvB-RuvC complex processes Holliday junction (HJ) DNA during genetic recombination and DNA repair, while the RuvA-RuvB complex plays an important role in the rescue of blocked DNA replication forks via replication fork reversal (RFR). RuvA specifically binds to HJ cruciform DNA, conferring on it an open structure. The RuvB hexamer acts as an ATP-dependent pump, pulling dsDNA into and through the RuvAB complex. RuvB forms 2 homohexamers on either side of HJ DNA bound by 1 or 2 RuvA tetramers; 4 subunits per hexamer contact DNA at a time. Coordinated motions by a converter formed by DNA-disengaged RuvB subunits stimulates ATP hydrolysis and nucleotide exchange. Immobilization of the converter enables RuvB to convert the ATP-contained energy into a lever motion, pulling 2 nucleotides of DNA out of the RuvA tetramer per ATP hydrolyzed, thus driving DNA branch migration. The RuvB motors rotate together with the DNA substrate, which together with the progressing nucleotide cycle form the mechanistic basis for DNA recombination by continuous HJ branch migration. Branch migration allows RuvC to scan DNA until it finds its consensus sequence, where it cleaves and resolves cruciform DNA. The sequence is that of Holliday junction branch migration complex subunit RuvB from Pelodictyon phaeoclathratiforme (strain DSM 5477 / BU-1).